A 393-amino-acid polypeptide reads, in one-letter code: Ceramide synthase 4 (393 aa).

Over 1–31 (MWSSLNDWLWNERLWLPANISWAQLEDHDGL) the chain is Lumenal. The N-linked (GlcNAc...) asparagine glycan is linked to Asn-19. Residues 32–52 (VFPHPQDTLMAVPLALALVVV) form a helical membrane-spanning segment. The tract at residues 67–128 (WLGVRNQIRR…RRRRNQDRPC (62 aa)) is homeobox-like. The 202-residue stretch at 131-332 (KKFCESSWKF…ILCMIYSFIK (202 aa)) folds into the TLC domain. Transmembrane regions (helical) follow at residues 140–160 (FVFY…ESWL), 179–199 (LYHW…TLPF), 209–229 (QVIH…LNLL), and 260–280 (MCDT…LVLF). The Last loop motif signature appears at 291–301 (ESIGNFSPFFG). The chain crosses the membrane as a helical span at residues 304-324 (FLNILLVILQLLHVFWSWLIL). At 325–393 (CMIYSFIKKG…RMVNRHTPAT (69 aa)) the chain is on the cytoplasmic side. Phosphoserine is present on residues Ser-342, Ser-349, and Ser-350. Over residues 346-356 (ELDSSDGEAAE) the composition is skewed to acidic residues. Positions 346-393 (ELDSSDGEAAEECPQMKNGAAQRPGAAPTDGPRSRAAGRMVNRHTPAT) are disordered.

Post-translationally, phosphorylated at the C-terminus by CK2.

It is found in the endoplasmic reticulum membrane. It catalyses the reaction sphinganine + octadecanoyl-CoA = N-(octadecanoyl)-sphinganine + CoA + H(+). The catalysed reaction is eicosanoyl-CoA + sphinganine = N-eicosanoylsphinganine + CoA + H(+). The enzyme catalyses docosanoyl-CoA + sphinganine = N-docosanoylsphinganine + CoA + H(+). It carries out the reaction tetracosanoyl-CoA + sphinganine = N-tetracosanoylsphinganine + CoA + H(+). It catalyses the reaction hexacosanoyl-CoA + sphinganine = N-hexacosanoylsphinganine + CoA + H(+). The catalysed reaction is a fatty acyl-CoA + sphing-4-enine = an N-acylsphing-4-enine + CoA + H(+). The enzyme catalyses sphing-4-enine + octadecanoyl-CoA = N-octadecanoylsphing-4-enine + CoA + H(+). It carries out the reaction hexadecasphinganine + octadecanoyl-CoA = N-octadecanoylhexadecasphinganine + CoA + H(+). Its pathway is lipid metabolism; sphingolipid metabolism. Its function is as follows. Ceramide synthase that catalyzes formation of ceramide from sphinganine and acyl-CoA substrates, with high selectivity toward long and very-long chains (C18:0-C22:0) as acyl donor. In Bos taurus (Bovine), this protein is Ceramide synthase 4.